Consider the following 159-residue polypeptide: MNIKIVCVGKLKEKYFKDGIAEYVKRMGRFAKVKIIQVPDEKAPEKLSPAEMEQVKEIEGKRILDKIKDKEYVYVTAIKGKERTSEDFAKELADLTTYGHSDITFVIGGSLGTSNAVNKRADDLISFGKFTMPHQLMRLVLVEQIYRAFMINSGSPYHK.

Gly108 contributes to the S-adenosyl-L-methionine binding site.

Belongs to the RNA methyltransferase RlmH family. In terms of assembly, homodimer.

Its subcellular location is the cytoplasm. The catalysed reaction is pseudouridine(1915) in 23S rRNA + S-adenosyl-L-methionine = N(3)-methylpseudouridine(1915) in 23S rRNA + S-adenosyl-L-homocysteine + H(+). In terms of biological role, specifically methylates the pseudouridine at position 1915 (m3Psi1915) in 23S rRNA. This Lactobacillus gasseri (strain ATCC 33323 / DSM 20243 / BCRC 14619 / CIP 102991 / JCM 1131 / KCTC 3163 / NCIMB 11718 / NCTC 13722 / AM63) protein is Ribosomal RNA large subunit methyltransferase H.